The primary structure comprises 422 residues: Dihydroorotase (422 aa).

His53 and His55 together coordinate Zn(2+). Substrate is bound by residues 55–57 and Asn87; that span reads HFR. Residues Glu138, His172, His223, and Asp291 each contribute to the Zn(2+) site. Residue Asp291 is part of the active site. His295 lines the substrate pocket.

The protein belongs to the metallo-dependent hydrolases superfamily. DHOase family. Class I DHOase subfamily. The cofactor is Zn(2+).

It carries out the reaction (S)-dihydroorotate + H2O = N-carbamoyl-L-aspartate + H(+). The protein operates within pyrimidine metabolism; UMP biosynthesis via de novo pathway; (S)-dihydroorotate from bicarbonate: step 3/3. Catalyzes the reversible cyclization of carbamoyl aspartate to dihydroorotate. The protein is Dihydroorotase of Halobacterium salinarum (strain ATCC 700922 / JCM 11081 / NRC-1) (Halobacterium halobium).